The primary structure comprises 349 residues: N-acetyltaurine hydrolase (349 aa).

His-26, His-28, Glu-169, His-201, His-230, and Asp-298 together coordinate a divalent metal cation.

The protein belongs to the metallo-dependent hydrolases superfamily. Phosphotriesterase family. Requires a divalent metal cation as cofactor. As to expression, expressed in the kidney, liver and brainstem.

Its subcellular location is the cytoplasm. It is found in the cytosol. It catalyses the reaction N-acetyltaurine + H2O = taurine + acetate. The catalysed reaction is N-propanoyltaurine + H2O = propanoate + taurine. The enzyme catalyses N-acetyl-L-methionine + H2O = L-methionine + acetate. It carries out the reaction N-acetyl-L-isoleucine + H2O = L-isoleucine + acetate. It catalyses the reaction N-acetyl-L-leucine + H2O = L-leucine + acetate. The catalysed reaction is N-acetyl-L-valine + H2O = L-valine + acetate. In terms of biological role, N-acetyltaurine hydrolase that regulates feeding by catalyzing the hydrolysis of N-acetyltaurine into taurine and acetate. N-acetyltaurine has anorexigenic and anti-obesity effects that are dependent on GFRAL receptor and GDF15. PTER also acts on other N-acetyl amino acids (Met, Ile, Leu, Val) and N-propionyltaurine, but at lower rates. The sequence is that of N-acetyltaurine hydrolase from Mus musculus (Mouse).